The sequence spans 636 residues: Epsin-3 (636 aa).

Residues Arg8, Lys11, Arg25, Asn30, Arg63, and His73 each contribute to the a 1,2-diacyl-sn-glycero-3-phospho-(1D-myo-inositol-4,5-bisphosphate) site. The region spanning 12–144 is the ENTH domain; sequence NIVHNYSEAE…KDEERLRQER (133 aa). The segment at 153-503 is disordered; sequence RMALEGMGIG…TPESFLGPSA (351 aa). Over residues 174 to 189 the composition is skewed to low complexity; that stretch reads GSPSSYTSASSSPRYA. Phosphoserine occurs at positions 184 and 185. 2 UIM domains span residues 202–221 and 229–248; these read EEELQLQLALAMSREEAERP and DEDLQLQLALSLSRQEHEKG. 2 stretches are compositionally biased toward basic and acidic residues: residues 214 to 231 and 242 to 256; these read SREEAERPVPPASHRDED and RQEHEKGVRSWKGDD. Ser257 carries the phosphoserine modification. Over residues 270-288 the composition is skewed to basic and acidic residues; sequence RQRDREPEREERKEEEKLK. Tandem repeats lie at residues 315–317, 338–340, 365–367, 381–383, and 398–400. The segment at 315–400 is 5 X 3 AA repeats of [DE]-P-W; sequence DPWDIPGLRP…KLPSTGADPW (86 aa). Residues 426–435 show a composition bias toward basic and acidic residues; sequence ESTEPKESRD. A run of 2 repeats spans residues 523-525 and 536-538. Residues 523–635 form a 3 X 3 AA repeats of N-P-F region; that stretch reads NPFLTGLGVP…LPPQAGTNPF (113 aa). The span at 607–616 shows a compositional bias: pro residues; it reads PPPASLPQPL. The interval 607 to 636 is disordered; sequence PPPASLPQPLLPTSGPMGPLPPQAGTNPFL. Residues 633–635 form repeat 3; the sequence is NPF.

This sequence belongs to the epsin family.

It localises to the cytoplasm. The protein resides in the cell cortex. It is found in the perinuclear region. The protein localises to the cytoplasmic vesicle. Its subcellular location is the clathrin-coated vesicle. In Mus musculus (Mouse), this protein is Epsin-3 (Epn3).